Here is a 256-residue protein sequence, read N- to C-terminus: 5-keto-4-deoxy-D-glucarate aldolase (256 aa).

H50 serves as the catalytic Proton acceptor. Q151 lines the substrate pocket. Residue E153 participates in Mg(2+) binding. Substrate-binding residues include S178 and D179. A Mg(2+)-binding site is contributed by D179.

It belongs to the HpcH/HpaI aldolase family. KDGluc aldolase subfamily. In terms of assembly, homohexamer; trimer of dimers. Mg(2+) serves as cofactor.

It carries out the reaction 5-dehydro-4-deoxy-D-glucarate = 2-hydroxy-3-oxopropanoate + pyruvate. The catalysed reaction is 2-dehydro-3-deoxy-D-glucarate = 2-hydroxy-3-oxopropanoate + pyruvate. It participates in carbohydrate acid metabolism; galactarate degradation; D-glycerate from galactarate: step 2/3. Catalyzes the reversible retro-aldol cleavage of both 5-keto-4-deoxy-D-glucarate and 2-keto-3-deoxy-D-glucarate to pyruvate and tartronic semialdehyde. This Escherichia coli (strain K12 / DH10B) protein is 5-keto-4-deoxy-D-glucarate aldolase.